The chain runs to 245 residues: Orotidine 5'-phosphate decarboxylase (245 aa).

Substrate contacts are provided by residues D22, K44, 71–80 (DLKFHDIPNT), T131, R192, Q201, G221, and R222. Catalysis depends on K73, which acts as the Proton donor.

Belongs to the OMP decarboxylase family. Type 1 subfamily. As to quaternary structure, homodimer.

It carries out the reaction orotidine 5'-phosphate + H(+) = UMP + CO2. It participates in pyrimidine metabolism; UMP biosynthesis via de novo pathway; UMP from orotate: step 2/2. Its function is as follows. Catalyzes the decarboxylation of orotidine 5'-monophosphate (OMP) to uridine 5'-monophosphate (UMP). This is Orotidine 5'-phosphate decarboxylase from Salmonella typhimurium (strain LT2 / SGSC1412 / ATCC 700720).